The following is a 186-amino-acid chain: MSLNTQIPEVLWAQRSNKDDAEKNVIYLTVLIPDAVDPKINLTPEKLVIDSKSGANAHYAVQIDFFKDIDVEKSKYSVTGRYIFFVLYKKELQEEFWPRLTKEKLRLHWLRTDFDRWVDEDEQEAQPEVSPFGAGGMPDLSALGGMGGMDFSQFGNLGGAGAGEDASDSEPELEEEEEVGSNEKKE.

The CS domain maps to 5–101; that stretch reads TQIPEVLWAQ…LQEEFWPRLT (97 aa). Residues 121-186 are disordered; it reads DEQEAQPEVS…EEVGSNEKKE (66 aa). A compositionally biased stretch (acidic residues) spans 165-180; sequence DASDSEPELEEEEEVG.

This sequence belongs to the p23/wos2 family.

Cell cycle regulatory protein that interacts with cdc2 in the control of the M-G1 transition. This is Protein wos2 (wos2) from Schizosaccharomyces pombe (strain 972 / ATCC 24843) (Fission yeast).